The following is a 575-amino-acid chain: MSTSSLRRQMKNIVHNYSEAEIKVREATSNDPWGPSSSLMSEIADLTYNVVAFSEIMSMIWKRLNDHGKNWRHVYKAMTLMEYLIKTGSERVSQQCKENMYAVQTLKDFQYVDRDGKDQGVNVREKAKQLVALLRDEDRLREERAHALKTKEKLAQTATASSAAVGSGPPPEAEQAWPQSSGEEELQLQLALAMSKEEADQPPSCGPEDDVQLQLALSLSREEHDKEERIRRGDDLRLQMAIEESKRETGGKEESSLMDLADVFTTPAPPQASDPWGGPASVPTAVPVAAAASDPWGAPAVPPAADPWGGAAPTPASGDPWRPAAPTGPSVDPWGGTPAPAAGEGPTSDPWGSADGGAPVSGPPSSDPWAPAPAFSDPWGGSPAKPSSNGTAVGGFDTEPDEFSDFDRLRTALPTSGSSTGELELLAGEVPARSPGAFDMSGVGGSLAESVGSPPPAATPTPTPPTRKTPESFLGPNAALVDLDSLVSRPGPTPPGAKASNPFLPSGAPATGPSVTNPFQPAPPATLTLNQLRLSPVPPVPGAPPTYISPLGGGPGLPPMMPPGPPAPNTNPFLL.

6 residues coordinate a 1,2-diacyl-sn-glycero-3-phospho-(1D-myo-inositol-4,5-bisphosphate): Arg-8, Lys-11, Arg-25, Asn-30, Arg-63, and His-73. Positions 12–144 constitute an ENTH domain; the sequence is NIVHNYSEAE…RDEDRLREER (133 aa). Positions 149–186 are disordered; the sequence is KTKEKLAQTATASSAAVGSGPPPEAEQAWPQSSGEEEL. Residues 157–167 show a composition bias toward low complexity; it reads TATASSAAVGS. 3 consecutive UIM domains span residues 183–202, 208–227, and 233–252; these read EEELQLQLALAMSKEEADQP, EDDVQLQLALSLSREEHDKE, and GDDLRLQMAIEESKRETGGK. Disordered stretches follow at residues 264 to 283 and 293 to 575; these read FTTPAPPQASDPWGGPASVP and SDPW…PFLL. Repeat copies occupy residues 274–276, 294–296, 306–308, 319–321, 332–334, 349–351, 367–369, and 377–379. Residues 274–379 form an 8 X 3 AA repeats of D-P-W region; sequence DPWGGPASVP…APAPAFSDPW (106 aa). Residues 306–316 are compositionally biased toward low complexity; that stretch reads DPWGGAAPTPA. A compositionally biased stretch (low complexity) spans 333–346; sequence PWGGTPAPAAGEGP. A compositionally biased stretch (low complexity) spans 367–379; the sequence is DPWAPAPAFSDPW. A Phosphoserine modification is found at Ser-382. Positions 401 to 410 match the [DE]-X(1,2)-F-X-X-[FL]-X-X-X-R motif motif; the sequence is DEFSDFDRLR. Ser-418 and Ser-419 each carry phosphoserine. At Thr-420 the chain carries Phosphothreonine. A phosphoserine mark is found at Ser-434, Ser-446, and Ser-453. Pro residues predominate over residues 453-467; the sequence is SPPPAATPTPTPPTR. Phosphothreonine occurs at positions 459, 463, and 469. Ser-472 carries the phosphoserine modification. Thr-493 carries the phosphothreonine modification. 2 tandem repeats follow at residues 501-503 and 517-519. A 3 X 3 AA repeats of N-P-F region spans residues 501-573; that stretch reads NPFLPSGAPA…GPPAPNTNPF (73 aa). Omega-N-methylarginine is present on Arg-533. Residues 556 to 569 show a composition bias toward pro residues; sequence GLPPMMPPGPPAPN. Residues 571-573 form repeat 3; the sequence is NPF.

This sequence belongs to the epsin family. Monomer. Binds ITSN1. Binds clathrin, ZBTB16/ZNF145, AP2A1 and AP2A2. Binds ubiquitinated proteins. Interacts with RALBP1 in a complex also containing NUMB and TFAP2A during interphase and mitosis. Interacts with AP2B1. Interacts with UBQLN2. Interacts with REPS2; the interaction is direct. Interacts with EPS15; the interaction is direct. Interacts with ENTREP1. Ubiquitinated. Post-translationally, phosphorylated on serine and/or threonine residues in mitotic cells. Phosphorylation reduces interaction with REPS2, AP-2 and the membrane fraction. Depolarization of synaptosomes results in dephosphorylation. Ubiquitously expressed. Detected in liver, spleen and testis, and weakly in lung and thymus (at protein level).

It is found in the cytoplasm. The protein localises to the cell membrane. Its subcellular location is the nucleus. It localises to the membrane. The protein resides in the clathrin-coated pit. In terms of biological role, binds to membranes enriched in phosphatidylinositol 4,5-bisphosphate (PtdIns(4,5)P2). Modifies membrane curvature and facilitates the formation of clathrin-coated invaginations. Regulates receptor-mediated endocytosis. In Rattus norvegicus (Rat), this protein is Epsin-1 (Epn1).